Consider the following 412-residue polypeptide: 1-deoxy-D-xylulose 5-phosphate reductoisomerase (412 aa).

Residues Thr10, Gly11, Ser12, Ile13, Gly36, Lys37, Asn38, and Asn130 each coordinate NADPH. Lys131 is a 1-deoxy-D-xylulose 5-phosphate binding site. NADPH is bound at residue Glu132. Asp156 is a Mn(2+) binding site. Positions 157, 158, 194, and 217 each coordinate 1-deoxy-D-xylulose 5-phosphate. Glu158 is a Mn(2+) binding site. NADPH is bound at residue Gly223. Ser230, Asn235, Lys236, and Glu239 together coordinate 1-deoxy-D-xylulose 5-phosphate. Mn(2+) is bound at residue Glu239.

It belongs to the DXR family. The cofactor is Mg(2+). Requires Mn(2+) as cofactor.

It catalyses the reaction 2-C-methyl-D-erythritol 4-phosphate + NADP(+) = 1-deoxy-D-xylulose 5-phosphate + NADPH + H(+). Its pathway is isoprenoid biosynthesis; isopentenyl diphosphate biosynthesis via DXP pathway; isopentenyl diphosphate from 1-deoxy-D-xylulose 5-phosphate: step 1/6. Catalyzes the NADPH-dependent rearrangement and reduction of 1-deoxy-D-xylulose-5-phosphate (DXP) to 2-C-methyl-D-erythritol 4-phosphate (MEP). This chain is 1-deoxy-D-xylulose 5-phosphate reductoisomerase, found in Prochlorococcus marinus (strain NATL1A).